We begin with the raw amino-acid sequence, 84 residues long: Large ribosomal subunit protein bL27 (84 aa).

Positions 1 to 21 (MAHKKAGGSTRNGRDSESKRL) are disordered.

It belongs to the bacterial ribosomal protein bL27 family.

This Baumannia cicadellinicola subsp. Homalodisca coagulata protein is Large ribosomal subunit protein bL27.